The chain runs to 228 residues: MSSTKHRIDLGTTYSCVGVFKNEQVDIIANDQGNRTTPSYVAFTETERLIGDARRTRWHEPPGNTVFDEAHDRPQVRRPDLQSDMKHWPFKVIVKDGKPVISVEYQNQTKTFSRGDLGYGAAENEGDGGGYLGTTVKDAVITVPAYFNDSQRQATKDAGSIAGLNVLRIINEPTAAAIAYGMDRKGDKGEKNVLIFDLGGGTFDVTLLTIESGVFEVKATAGDTHLGG.

The interval 57–80 (RWHEPPGNTVFDEAHDRPQVRRPD) is disordered. Positions 68–80 (DEAHDRPQVRRPD) are enriched in basic and acidic residues.

The protein belongs to the heat shock protein 70 family.

This is Heat shock 70-related protein 4 (HSP70.4) from Leishmania major.